A 796-amino-acid polypeptide reads, in one-letter code: RalBP1-associated Eps domain-containing protein 1 (796 aa).

Residues 10 to 113 (EQKYYSDLFS…SKNEQESRHA (104 aa)) enclose the EH 1 domain. The disordered stretch occupies residues 105-237 (KNEQESRHAA…ENWVSFADTP (133 aa)). The segment covering 115-126 (SYSSDSENQGSY) has biased composition (polar residues). 5 positions are modified to phosphoserine: Ser-143, Ser-145, Ser-162, Ser-166, and Ser-170. A compositionally biased stretch (polar residues) spans 145 to 156 (SHDTVQPRTSAD). At Thr-173 the chain carries Phosphothreonine. Phosphoserine is present on residues Ser-272 and Ser-273. The 90-residue stretch at 285–374 (QRQYYVNQFK…ESLMPKLIDL (90 aa)) folds into the EH 2 domain. At Tyr-288 the chain carries Phosphotyrosine. Phosphoserine is present on Ser-307. Residues 318–353 (LPILELSHIWELSDFDKDGALTLDEFCAAFHLVVAR) form the EF-hand domain. The Ca(2+) site is built by Asp-331, Asp-333, Asp-335, and Glu-342. The tract at residues 377-433 (SADVGDQPGEVGYSGSPAEAPPSKSPSMPSLNQTWPELNQSSEQWETFSERSSSSQT) is disordered. Positions 407–433 (LNQTWPELNQSSEQWETFSERSSSSQT) are enriched in polar residues. Phosphoserine is present on residues Ser-475, Ser-482, Ser-489, and Ser-540. Residues 506–543 (GNTVADGYSSSDSFTSDPEQIGSNVTRQRSHSGTSPDN) are compositionally biased toward polar residues. Disordered regions lie at residues 506–624 (GNTV…IPEQ) and 638–725 (ASNV…QKTG). Position 544 is a phosphothreonine (Thr-544). Pro residues predominate over residues 544 to 554 (TAPPPPPPRPQ). Ser-562 carries the phosphoserine modification. Residues 563–574 (LDMNRTFTVTTG) are compositionally biased toward polar residues. Residues 575–584 (QQQAGVVAHP) are compositionally biased toward low complexity. Positions 585-596 (PAVPPRPQPSQA) are enriched in pro residues. Over residues 612–623 (THTSTSPQQIPE) the composition is skewed to polar residues. The tract at residues 652 to 796 (HPEVLPAEKA…LEQLRPFSHL (145 aa)) is interaction with RALBP1. 2 stretches are compositionally biased toward basic and acidic residues: residues 671–681 (AKTDSKTEEKT) and 708–722 (KSED…EHTQ). 2 positions are modified to phosphoserine: Ser-709 and Ser-740. Residues 751-791 (SIRRNKETNTVLARLNSELQQQLKDVLEERISLEVQLEQLR) adopt a coiled-coil conformation.

Homodimer (Potential). Interacts with RAB11FIP2. Interacts with RALBP1, CRK and GRB2. Binding to RALBP1 does not affect its Ral-binding activity. Forms a complex with the SH3 domains of CRK and GRB2 which may link it to an EGF-responsive tyrosine kinase. Interacts with AMPH, ITSN1 (via SH3 domains) and SGIP1; may be involved in clathrin-mediated endocytosis. In terms of processing, EGF stimulates phosphorylation on Tyr-residues. As to expression, widely expressed with highest levels in heart and testis.

It localises to the membrane. The protein resides in the clathrin-coated pit. Functionally, may coordinate the cellular actions of activated EGF receptors and Ral-GTPases. The protein is RalBP1-associated Eps domain-containing protein 1 (REPS1) of Homo sapiens (Human).